The primary structure comprises 311 residues: GTP cyclohydrolase MptA (311 aa).

Belongs to the GTP cyclohydrolase IV family. In terms of assembly, homodimer. Requires Fe(2+) as cofactor.

It carries out the reaction GTP + H2O = 7,8-dihydroneopterin 2',3'-cyclic phosphate + formate + diphosphate + H(+). It functions in the pathway cofactor biosynthesis; 5,6,7,8-tetrahydromethanopterin biosynthesis. Functionally, converts GTP to 7,8-dihydro-D-neopterin 2',3'-cyclic phosphate, the first intermediate in the biosynthesis of coenzyme methanopterin. The sequence is that of GTP cyclohydrolase MptA from Halobacterium salinarum (strain ATCC 29341 / DSM 671 / R1).